The sequence spans 172 residues: MSSSQNNNSSWIDWFLGIKGNQFLCRVPTDYVQDTFNQMGLEYFSEILDVILKPVIDSSSGLLYGDEKKWYGMIHARYIRSERGLIAMHRKYMRGDFGSCPNISCDRQNTLPVGVSAVWGKSTVKIHCPRCKSNFHPKSDTQLDGAMFGPSFPDIFFSMLPNLTSPLDDPRT.

It belongs to the casein kinase 2 subunit beta family. In terms of assembly, interacts in vitro with the casein kinase 2 alpha subunit (CkII-alpha). The relevance of such interaction is however unclear in vivo. In terms of tissue distribution, probably not expressed in wild-type flies. In males lacking the Y chromosome, it is testis-specific and constitutes the main component of star-shaped crystals.

Functionally, unknown. In males lacking the Y chromosome, its strong overexpression leads to the appearance of proteinaceous star-shaped crystals in the primary spermatocytes causing meiotic drive, possibly by interfering with normal casein kinase 2 activity. The protein is Stellate orphon protein at 12D (Ste12DOR) of Drosophila melanogaster (Fruit fly).